Reading from the N-terminus, the 231-residue chain is Ion-translocating oxidoreductase complex subunit E (231 aa).

Transmembrane regions (helical) follow at residues 18 to 38, 39 to 59, 63 to 83, 86 to 106, 125 to 145, and 182 to 202; these read ALVQ…ATNA, LGLG…ISTL, TPAE…VSAV, LINA…PLIV, ALSA…MFVL, and PFLL…MLAG.

The protein belongs to the NqrDE/RnfAE family. The complex is composed of six subunits: RsxA, RsxB, RsxC, RsxD, RsxE and RsxG.

The protein localises to the cell inner membrane. Functionally, part of a membrane-bound complex that couples electron transfer with translocation of ions across the membrane. Required to maintain the reduced state of SoxR. This is Ion-translocating oxidoreductase complex subunit E from Escherichia coli O7:K1 (strain IAI39 / ExPEC).